The sequence spans 162 residues: Transcription antitermination protein RfaH (162 aa).

This sequence belongs to the RfaH family. Interacts with both the nontemplate DNA and the RNA polymerase (RNAP). Monomer in solution.

Functionally, enhances distal genes transcription elongation in a specialized subset of operons that encode extracytoplasmic components. RfaH is recruited into a multi-component RNA polymerase complex by the ops element, which is a short conserved DNA sequence located downstream of the main promoter of these operons. Once bound, RfaH suppresses pausing and inhibits Rho-dependent and intrinsic termination at a subset of sites. Termination signals are bypassed, which allows complete synthesis of long RNA chains. Enhances expression of several operons involved in synthesis of lipopolysaccharides, exopolysaccharides, hemolysin, and sex factor. Also negatively controls expression and surface presentation of AG43 and possibly another AG43-independent factor that mediates cell-cell interactions and biofilm formation. The sequence is that of Transcription antitermination protein RfaH from Escherichia coli (strain K12).